The following is a 267-amino-acid chain: Regulatory protein RecX (267 aa).

The protein belongs to the RecX family.

The protein localises to the cytoplasm. Functionally, modulates RecA activity. The polypeptide is Regulatory protein RecX (Staphylococcus carnosus (strain TM300)).